The primary structure comprises 197 residues: Thymidine kinase (197 aa).

Residues Ser9–Thr16 and Asp87–His90 each bind ATP. Glu88 serves as the catalytic Proton acceptor. Residues Cys145, Cys147, Cys187, and His190 each coordinate Zn(2+).

Belongs to the thymidine kinase family. As to quaternary structure, homotetramer.

It localises to the cytoplasm. The catalysed reaction is thymidine + ATP = dTMP + ADP + H(+). This Francisella tularensis subsp. tularensis (strain SCHU S4 / Schu 4) protein is Thymidine kinase.